A 181-amino-acid polypeptide reads, in one-letter code: Large ribosomal subunit protein uL30 (181 aa).

The protein belongs to the universal ribosomal protein uL30 family. As to quaternary structure, part of the 50S ribosomal subunit.

In Hyperthermus butylicus (strain DSM 5456 / JCM 9403 / PLM1-5), this protein is Large ribosomal subunit protein uL30.